The chain runs to 490 residues: Glutamate--tRNA ligase (490 aa).

The short motif at Pro-10–Gly-20 is the 'HIGH' region element. Residues Lys-251–Arg-255 carry the 'KMSKS' region motif. Residue Lys-254 participates in ATP binding.

It belongs to the class-I aminoacyl-tRNA synthetase family. Glutamate--tRNA ligase type 1 subfamily. As to quaternary structure, monomer.

The protein localises to the cytoplasm. The enzyme catalyses tRNA(Glu) + L-glutamate + ATP = L-glutamyl-tRNA(Glu) + AMP + diphosphate. Catalyzes the attachment of glutamate to tRNA(Glu) in a two-step reaction: glutamate is first activated by ATP to form Glu-AMP and then transferred to the acceptor end of tRNA(Glu). In Moorella thermoacetica (strain ATCC 39073 / JCM 9320), this protein is Glutamate--tRNA ligase.